An 888-amino-acid polypeptide reads, in one-letter code: MQAVERRPSLLFDEYQNSVTKPNETKNKEARVLSENDGDVSPSVLKQKEISVDDMDMISLPTEFDRQMVLGSPMFFDLEDEENKIDPLPSVSHHYGNGESDSFVSSYTPSNLKTGEETKDLFINPFELVSQMRKRYIAASKQDGISNIKNDTEKWFLYPKPLPKFWRFEDDKRFQDPSDSDLNDDGDSTGTGAATPHRHGYYYPSYFTDHYYYYTKSGLKGKGNIKVPYTGEYFDLEDYKKQYIYHLSNQENTQNPLSPYSSKEESLEEEFLTDVPTFQEFRDDFAYIIELIQSHKFNEVSRKRLSYLLDKFELFQYLNSKKEILANKNVPYRDFYNSRKVDRDLSLSGCISQRQLSEYIWEKINLEPERIVYQDPETSRKLSLRDIFQFGCSSNDQPIAIGLKLIDDEFLDWYRNIYLIDYHLTPNKVAKLVGKEMRFYLLAKVFLEFDNFIEGEYLAEIFIKYVIHILEKSKYQLAQVSVNFQFYSSGEDWYKKFSQWLLRWKLVSYNIRWNIQIARIFPKLFKENVVSNFQEFLDLIFNPLFTLEKEQLPIDSSVNTDIIGLQFFLSNVCSMDLVIKESDEYYWKEFTDMNCKPKFWTAQGDNPTVAHYMYYIYKSLAKVNFLRSQNLQNTITLRNYCSPLSSRTSQFGVDLYFTDQVESLVCNLLLCNGGLLQVEPLWDTATMIQYLFYLFQIPILAAPLSSVSLLNSQKSTFLKNKNVLLEHDYLKDQETAKINPSRDITVGEQRSYETNPFMKMFKMGLKISLSSKSILYNSSYTLEPLIEEYSVAASIYLLNPTDLCELSRTSVLSSGYEGWYKAHWIGVGVKKAPYFEENVGGIDNWYDTAKDTSIKHNVPMIRRRYRKETLDQEWNFVRDHFGVINSIW.

Residues 1–42 are disordered; it reads MQAVERRPSLLFDEYQNSVTKPNETKNKEARVLSENDGDVSP. Residue S9 is modified to Phosphoserine. The span at 23 to 34 shows a compositional bias: basic and acidic residues; sequence NETKNKEARVLS. 3 positions are modified to phosphoserine: S41, S178, and S180.

It belongs to the metallo-dependent hydrolases superfamily. Adenosine and AMP deaminases family.

The protein is Inactive deaminase YJL070C of Saccharomyces cerevisiae (strain ATCC 204508 / S288c) (Baker's yeast).